The sequence spans 240 residues: Octanoyltransferase (240 aa).

One can recognise a BPL/LPL catalytic domain in the interval 31–216 (GQVGDTLLLL…HLCAVFDLEP (186 aa)). Residues 76–83 (RGGGATYH), 145–147 (AIG), and 159–161 (GLA) contribute to the substrate site. Residue C177 is the Acyl-thioester intermediate of the active site.

It belongs to the LipB family.

The protein localises to the cytoplasm. It catalyses the reaction octanoyl-[ACP] + L-lysyl-[protein] = N(6)-octanoyl-L-lysyl-[protein] + holo-[ACP] + H(+). It functions in the pathway protein modification; protein lipoylation via endogenous pathway; protein N(6)-(lipoyl)lysine from octanoyl-[acyl-carrier-protein]: step 1/2. Functionally, catalyzes the transfer of endogenously produced octanoic acid from octanoyl-acyl-carrier-protein onto the lipoyl domains of lipoate-dependent enzymes. Lipoyl-ACP can also act as a substrate although octanoyl-ACP is likely to be the physiological substrate. The polypeptide is Octanoyltransferase (Roseiflexus sp. (strain RS-1)).